Consider the following 91-residue polypeptide: Small ribosomal subunit protein bS18 (91 aa).

Belongs to the bacterial ribosomal protein bS18 family. As to quaternary structure, part of the 30S ribosomal subunit. Forms a tight heterodimer with protein bS6.

Functionally, binds as a heterodimer with protein bS6 to the central domain of the 16S rRNA, where it helps stabilize the platform of the 30S subunit. The sequence is that of Small ribosomal subunit protein bS18 from Syntrophotalea carbinolica (strain DSM 2380 / NBRC 103641 / GraBd1) (Pelobacter carbinolicus).